The primary structure comprises 630 residues: 1-deoxy-D-xylulose-5-phosphate synthase (630 aa).

Thiamine diphosphate-binding positions include histidine 72 and 113–115 (GHS). Residue aspartate 144 coordinates Mg(2+). Residues 145-146 (GA), asparagine 173, tyrosine 284, and glutamate 367 each bind thiamine diphosphate. Residue asparagine 173 coordinates Mg(2+).

This sequence belongs to the transketolase family. DXPS subfamily. As to quaternary structure, homodimer. Mg(2+) serves as cofactor. Thiamine diphosphate is required as a cofactor.

The enzyme catalyses D-glyceraldehyde 3-phosphate + pyruvate + H(+) = 1-deoxy-D-xylulose 5-phosphate + CO2. Its pathway is metabolic intermediate biosynthesis; 1-deoxy-D-xylulose 5-phosphate biosynthesis; 1-deoxy-D-xylulose 5-phosphate from D-glyceraldehyde 3-phosphate and pyruvate: step 1/1. Functionally, catalyzes the acyloin condensation reaction between C atoms 2 and 3 of pyruvate and glyceraldehyde 3-phosphate to yield 1-deoxy-D-xylulose-5-phosphate (DXP). In Bacillus cereus (strain B4264), this protein is 1-deoxy-D-xylulose-5-phosphate synthase.